The following is an 83-amino-acid chain: RNA-binding protein Hfq (83 aa).

A Sm domain is found at Asp9–Ile69.

This sequence belongs to the Hfq family. As to quaternary structure, homohexamer.

Functionally, RNA chaperone that binds small regulatory RNA (sRNAs) and mRNAs to facilitate mRNA translational regulation in response to envelope stress, environmental stress and changes in metabolite concentrations. Also binds with high specificity to tRNAs. The chain is RNA-binding protein Hfq from Leptospira biflexa serovar Patoc (strain Patoc 1 / Ames).